The following is a 606-amino-acid chain: Putative auxin response factor 21 (606 aa).

The TF-B3 DNA-binding region spans 126–228 (FTKVLTASDT…ELRVGIRRAR (103 aa)). One can recognise a PB1 domain in the interval 511 to 592 (RTCTKVQMQG…MVKKILIYSK (82 aa)).

It belongs to the ARF family. In terms of assembly, homodimers and heterodimers.

It localises to the nucleus. Functionally, auxin response factors (ARFs) are transcriptional factors that bind specifically to the DNA sequence 5'-TGTCTC-3' found in the auxin-responsive promoter elements (AuxREs). Could act as transcriptional activator or repressor. Formation of heterodimers with Aux/IAA proteins may alter their ability to modulate early auxin response genes expression. In Arabidopsis thaliana (Mouse-ear cress), this protein is Putative auxin response factor 21 (ARF21).